Consider the following 283-residue polypeptide: DNA repair protein RecO (283 aa).

The segment covering 254-264 (SSPASVGSSAT) has biased composition (polar residues). Positions 254–283 (SSPASVGSSATRYFAQGDTDENDRDPPGAR) are disordered.

The protein belongs to the RecO family.

Functionally, involved in DNA repair and RecF pathway recombination. The sequence is that of DNA repair protein RecO from Roseiflexus sp. (strain RS-1).